A 358-amino-acid chain; its full sequence is 3-isopropylmalate dehydrogenase (358 aa).

The substrate site is built by Arg92, Arg102, Arg130, and Asp224. Asp224, Asp248, and Asp252 together coordinate Mg(2+). 282–294 (GSAPDIAGQGIAN) contacts NAD(+).

It belongs to the isocitrate and isopropylmalate dehydrogenases family. LeuB type 1 subfamily. As to quaternary structure, homodimer. Requires Mg(2+) as cofactor. The cofactor is Mn(2+).

It localises to the cytoplasm. It carries out the reaction (2R,3S)-3-isopropylmalate + NAD(+) = 4-methyl-2-oxopentanoate + CO2 + NADH. It functions in the pathway amino-acid biosynthesis; L-leucine biosynthesis; L-leucine from 3-methyl-2-oxobutanoate: step 3/4. Its function is as follows. Catalyzes the oxidation of 3-carboxy-2-hydroxy-4-methylpentanoate (3-isopropylmalate) to 3-carboxy-4-methyl-2-oxopentanoate. The product decarboxylates to 4-methyl-2 oxopentanoate. In Bordetella avium (strain 197N), this protein is 3-isopropylmalate dehydrogenase.